The sequence spans 246 residues: 1-(5-phosphoribosyl)-5-[(5-phosphoribosylamino)methylideneamino] imidazole-4-carboxamide isomerase (246 aa).

Asp-8 functions as the Proton acceptor in the catalytic mechanism. The Proton donor role is filled by Asp-130.

Belongs to the HisA/HisF family.

It localises to the cytoplasm. It carries out the reaction 1-(5-phospho-beta-D-ribosyl)-5-[(5-phospho-beta-D-ribosylamino)methylideneamino]imidazole-4-carboxamide = 5-[(5-phospho-1-deoxy-D-ribulos-1-ylimino)methylamino]-1-(5-phospho-beta-D-ribosyl)imidazole-4-carboxamide. It participates in amino-acid biosynthesis; L-histidine biosynthesis; L-histidine from 5-phospho-alpha-D-ribose 1-diphosphate: step 4/9. The polypeptide is 1-(5-phosphoribosyl)-5-[(5-phosphoribosylamino)methylideneamino] imidazole-4-carboxamide isomerase (Hydrogenovibrio crunogenus (strain DSM 25203 / XCL-2) (Thiomicrospira crunogena)).